A 94-amino-acid polypeptide reads, in one-letter code: Large ribosomal subunit protein uL23 (94 aa).

It belongs to the universal ribosomal protein uL23 family. Part of the 50S ribosomal subunit. Contacts protein L29, and trigger factor when it is bound to the ribosome.

Functionally, one of the early assembly proteins it binds 23S rRNA. One of the proteins that surrounds the polypeptide exit tunnel on the outside of the ribosome. Forms the main docking site for trigger factor binding to the ribosome. The polypeptide is Large ribosomal subunit protein uL23 (Latilactobacillus sakei subsp. sakei (strain 23K) (Lactobacillus sakei subsp. sakei)).